The sequence spans 197 residues: NADH-quinone oxidoreductase subunit C (197 aa).

The protein belongs to the complex I 30 kDa subunit family. As to quaternary structure, NDH-1 is composed of 14 different subunits. Subunits NuoB, C, D, E, F, and G constitute the peripheral sector of the complex.

It localises to the cell inner membrane. It carries out the reaction a quinone + NADH + 5 H(+)(in) = a quinol + NAD(+) + 4 H(+)(out). In terms of biological role, NDH-1 shuttles electrons from NADH, via FMN and iron-sulfur (Fe-S) centers, to quinones in the respiratory chain. The immediate electron acceptor for the enzyme in this species is believed to be ubiquinone. Couples the redox reaction to proton translocation (for every two electrons transferred, four hydrogen ions are translocated across the cytoplasmic membrane), and thus conserves the redox energy in a proton gradient. In Neisseria meningitidis serogroup A / serotype 4A (strain DSM 15465 / Z2491), this protein is NADH-quinone oxidoreductase subunit C.